The sequence spans 1179 residues: Serine/threonine-protein kinase pakG (1179 aa).

The stretch at 12–53 forms a coiled coil; that stretch reads SKTNEDIELIKQKLKEDRELLEKERAQFEEERKIIFESLNKV. The CRIB domain maps to 111–124; sequence IGTPFNVQHKVHVD. Positions 139 to 390 constitute a Protein kinase domain; the sequence is FLIDCILGTG…AIELLTHPFL (252 aa). Residues 145–153 and lysine 168 contribute to the ATP site; that span reads LGTGSYGTV. Catalysis depends on aspartate 257, which acts as the Proton acceptor. Disordered stretches follow at residues 414 to 469, 589 to 631, 705 to 1086, and 1121 to 1179; these read KKKK…SSLD, IGNS…NNNN, SSSS…PITL, and TEIN…SPKK. Positions 621 to 668 form a coiled coil; sequence NNNNNNNNNNNEFLINQIKKELILDFNENMKQYINQQLTNLKEEMLKE. 2 stretches are compositionally biased toward low complexity: residues 705–723 and 743–761; these read SSSSSSSFLNSSPSSSNSS and LPPSQQSTPVTTTTTTSSP. Over residues 762–776 the composition is skewed to pro residues; sequence SPSPSPSPSPSPSSP. 2 stretches are compositionally biased toward low complexity: residues 777–788 and 812–833; these read LPSSSTSTVNTP and NNNNTNNNNNNNNSNNNNNNNN. Residues 834 to 857 show a composition bias toward polar residues; it reads VIQSPKLNNRPLSPTTPTKQFNNR. The span at 864–891 shows a compositional bias: low complexity; it reads FNNRPPSPSKFNNRPPSPSNRPLSPKNS. Positions 892–946 are enriched in polar residues; sequence YNSLEKSNNGSISNNRPLSPKNSLEKSTTQNNTSSEDISTTTVTVTSEQGGTPIT. Pro residues predominate over residues 954-963; that stretch reads RPKPSPPPIP. Low complexity-rich tracts occupy residues 964 to 997, 1024 to 1046, and 1053 to 1077; these read MNKSSPKRAPSPSSNRRLSSSFTAQSSTASTIAA, TTITSSTNSPIKPLSPLNKSPNS, and ITTSNISNNSNINNNNNNNSNSSSN. Over residues 1121–1135 the composition is skewed to polar residues; sequence TEINLPSSSPSTPQK. Residues 1137-1158 are compositionally biased toward low complexity; that stretch reads NTPSSIPTTPTTPTTNGGSVSS.

The protein belongs to the protein kinase superfamily. STE Ser/Thr protein kinase family. STE20 subfamily. It depends on Mg(2+) as a cofactor.

The enzyme catalyses L-seryl-[protein] + ATP = O-phospho-L-seryl-[protein] + ADP + H(+). It catalyses the reaction L-threonyl-[protein] + ATP = O-phospho-L-threonyl-[protein] + ADP + H(+). The protein is Serine/threonine-protein kinase pakG of Dictyostelium discoideum (Social amoeba).